Consider the following 270-residue polypeptide: Sugar phosphatase YidA (270 aa).

Catalysis depends on Asp-9, which acts as the Nucleophile. Asp-9 provides a ligand contact to Mg(2+). Residue Met-10 coordinates phosphate. Asp-11 serves as a coordination point for Mg(2+). Phosphate is bound by residues Thr-43–Gly-44 and Lys-197. Position 220 (Asp-220) interacts with Mg(2+). Asn-223 contacts phosphate.

Belongs to the HAD-like hydrolase superfamily. Cof family. In terms of assembly, homodimer. It depends on Mg(2+) as a cofactor.

The enzyme catalyses sugar phosphate + H2O = sugar + phosphate.. Functionally, catalyzes the dephosphorylation of different sugar phosphates. In Escherichia coli O6:H1 (strain CFT073 / ATCC 700928 / UPEC), this protein is Sugar phosphatase YidA (yidA).